A 263-amino-acid chain; its full sequence is Phosphatidylglycerol--prolipoprotein diacylglyceryl transferase (263 aa).

The next 4 helical transmembrane spans lie at 10–30 (VAIT…LFGF), 56–76 (MVTY…ILFY), 91–111 (IWNG…AMWL), and 117–137 (GLGF…GLFF). Arginine 139 is an a 1,2-diacyl-sn-glycero-3-phospho-(1'-sn-glycerol) binding site. Transmembrane regions (helical) follow at residues 171–191 (PSQL…LWVF), 199–219 (GHVS…VEFV), and 231–251 (FGWL…GLWL).

Belongs to the Lgt family.

Its subcellular location is the cell inner membrane. It catalyses the reaction L-cysteinyl-[prolipoprotein] + a 1,2-diacyl-sn-glycero-3-phospho-(1'-sn-glycerol) = an S-1,2-diacyl-sn-glyceryl-L-cysteinyl-[prolipoprotein] + sn-glycerol 1-phosphate + H(+). Its pathway is protein modification; lipoprotein biosynthesis (diacylglyceryl transfer). Its function is as follows. Catalyzes the transfer of the diacylglyceryl group from phosphatidylglycerol to the sulfhydryl group of the N-terminal cysteine of a prolipoprotein, the first step in the formation of mature lipoproteins. The chain is Phosphatidylglycerol--prolipoprotein diacylglyceryl transferase from Nitratidesulfovibrio vulgaris (strain ATCC 29579 / DSM 644 / CCUG 34227 / NCIMB 8303 / VKM B-1760 / Hildenborough) (Desulfovibrio vulgaris).